A 359-amino-acid chain; its full sequence is Putative gluconeogenesis factor (359 aa).

Residues 317–359 (VGNQDSSAPTVAATEQIRLDGKRPQTGVNGPVGKGPRGDDAWR) are disordered.

This sequence belongs to the gluconeogenesis factor family.

Its subcellular location is the cytoplasm. In terms of biological role, required for morphogenesis under gluconeogenic growth conditions. In Mycobacterium leprae (strain TN), this protein is Putative gluconeogenesis factor.